Consider the following 220-residue polypeptide: Aspartic protease inhibitor 4 (220 aa).

Residues 1-23 (MMKCLFLLCLCLLPILVFSSTFT) form the signal peptide. A propeptide spanning residues 24 to 32 (SQNPINLPS) is cleaved from the precursor. The Vacuolar targeting signal signature appears at 26 to 31 (NPINLP). N51 is a glycosylation site (N-linked (GlcNAc...) asparagine). Disulfide bonds link C80-C125 and C174-C185.

This sequence belongs to the protease inhibitor I3 (leguminous Kunitz-type inhibitor) family. In terms of tissue distribution, tubers.

Its subcellular location is the vacuole. Inhibits tightly cathepsin D (aspartic protease) and weakly trypsin (serine protease). May protect the plant by inhibiting proteases of invading organisms. This is Aspartic protease inhibitor 4 from Solanum tuberosum (Potato).